The sequence spans 489 residues: UDP-N-acetylmuramate--L-alanine ligase (489 aa).

ATP is bound at residue 130 to 136 (GTHGKTS).

The protein belongs to the MurCDEF family.

It is found in the cytoplasm. It carries out the reaction UDP-N-acetyl-alpha-D-muramate + L-alanine + ATP = UDP-N-acetyl-alpha-D-muramoyl-L-alanine + ADP + phosphate + H(+). The protein operates within cell wall biogenesis; peptidoglycan biosynthesis. In terms of biological role, cell wall formation. This chain is UDP-N-acetylmuramate--L-alanine ligase, found in Corynebacterium efficiens (strain DSM 44549 / YS-314 / AJ 12310 / JCM 11189 / NBRC 100395).